A 301-amino-acid polypeptide reads, in one-letter code: Putative carboxypeptidase slr1534 (301 aa).

The active-site Nucleophile is serine 116. Active-site charge relay system residues include glutamate 206 and histidine 276.

Belongs to the peptidase S66 family.

This Synechocystis sp. (strain ATCC 27184 / PCC 6803 / Kazusa) protein is Putative carboxypeptidase slr1534.